The following is a 360-amino-acid chain: SPRY domain-containing SOCS box protein 3 (360 aa).

The segment at 21–54 (DQDGRSPALHAEEEAWGYDSDGQHSNSDSDTDLL) is disordered. The B30.2/SPRY domain maps to 84–274 (SLHPFRQIKS…MKVIRSCCCR (191 aa)). Positions 264–315 (SMKVIRSCCCRTSLQYLCCARLRQLLPGSVDSLEVLPLPPGLKQVLSNKLGW) constitute an SOCS box domain. Positions 322 to 350 (NRSSQHKGDGSATTSCGSYSDSSCTPGHD) are disordered. Residues 332–346 (SATTSCGSYSDSSCT) show a composition bias toward polar residues.

This sequence belongs to the SPSB family. As to quaternary structure, substrate-recognition component of the ECS(SPSB3) complex, composed of spsb3, cul5, elob, elob and rnf7/rbx2.

It localises to the nucleus. The protein operates within protein modification; protein ubiquitination. Functionally, substrate-recognition component of a cullin-5-RING E3 ubiquitin-protein ligase complex (ECS complex, also named CRL5 complex), which mediates the ubiquitination and subsequent proteasomal degradation of target proteins. This Xenopus laevis (African clawed frog) protein is SPRY domain-containing SOCS box protein 3 (spsb3).